A 167-amino-acid polypeptide reads, in one-letter code: NADH-ubiquinone oxidoreductase chain 6 (167 aa).

Helical transmembrane passes span 1–21, 27–47, 50–70, 88–108, and 143–163; these read MKMM…VAFA, VYGG…VVSL, VFLG…VFGY, VALS…LMSG, and WALV…LEVV.

This sequence belongs to the complex I subunit 6 family. As to quaternary structure, core subunit of respiratory chain NADH dehydrogenase (Complex I) which is composed of 45 different subunits.

The protein localises to the mitochondrion inner membrane. It carries out the reaction a ubiquinone + NADH + 5 H(+)(in) = a ubiquinol + NAD(+) + 4 H(+)(out). Functionally, core subunit of the mitochondrial membrane respiratory chain NADH dehydrogenase (Complex I) which catalyzes electron transfer from NADH through the respiratory chain, using ubiquinone as an electron acceptor. Essential for the catalytic activity and assembly of complex I. The protein is NADH-ubiquinone oxidoreductase chain 6 (MT-ND6) of Osphranter robustus (Wallaroo).